The primary structure comprises 382 residues: Saccharopine dehydrogenase [NAD(+), L-lysine-forming] (382 aa).

Residues R20 and K79 each contribute to the L-saccharopine site. Residue K79 is the Proton acceptor of the active site. The active-site Proton donor is H98. Q103 serves as a coordination point for L-saccharopine. R132 lines the NAD(+) pocket. L-saccharopine-binding residues include R133 and F137. NAD(+) contacts are provided by residues 215–216 (GR), D239, T243, Y263, and V290. The cysteines at positions 217 and 261 are disulfide-linked. 291-293 (SAD) contributes to the L-saccharopine binding site. 330-333 (IDHL) is an NAD(+) binding site.

This sequence belongs to the AlaDH/PNT family. As to quaternary structure, monomer.

The enzyme catalyses L-saccharopine + NAD(+) + H2O = L-lysine + 2-oxoglutarate + NADH + H(+). Its pathway is amino-acid biosynthesis; L-lysine biosynthesis via AAA pathway; L-lysine from L-alpha-aminoadipate (fungal route): step 3/3. Catalyzes the NAD(+)-dependent cleavage of saccharopine to L-lysine and 2-oxoglutarate, the final step in the alpha-aminoadipate (AAA) pathway for lysin biosynthesis. The chain is Saccharopine dehydrogenase [NAD(+), L-lysine-forming] from Candida albicans (strain SC5314 / ATCC MYA-2876) (Yeast).